A 266-amino-acid chain; its full sequence is NAD kinase 2 (266 aa).

The active-site Proton acceptor is the Asp51. NAD(+) contacts are provided by residues 51-52 (DG), 123-124 (NE), Arg150, Asp152, 163-168 (TGYSKS), and Ala187.

It belongs to the NAD kinase family. A divalent metal cation serves as cofactor.

The protein localises to the cytoplasm. The enzyme catalyses NAD(+) + ATP = ADP + NADP(+) + H(+). Involved in the regulation of the intracellular balance of NAD and NADP, and is a key enzyme in the biosynthesis of NADP. Catalyzes specifically the phosphorylation on 2'-hydroxyl of the adenosine moiety of NAD to yield NADP. This chain is NAD kinase 2, found in Oceanobacillus iheyensis (strain DSM 14371 / CIP 107618 / JCM 11309 / KCTC 3954 / HTE831).